Consider the following 665-residue polypeptide: Golgi-associated RAB2B interactor protein 3 (665 aa).

Disordered stretches follow at residues 211–240 (EIRGEGDQNSRPQSSPTVSEATSAAFAGGE), 272–296 (AAAGTAGPAAGPAAGTAGPAAGTAG), and 480–590 (SEGY…GSVS). Residues 219–232 (NSRPQSSPTVSEAT) show a composition bias toward polar residues. Residues 499 to 513 (EAKEKRERREKDRTS) are compositionally biased toward basic and acidic residues. Basic residues-rich tracts occupy residues 514 to 538 (SRKSSHHRRTGMSRHSSKDKSRKTS) and 554 to 566 (GHGRLRGKRHSSS). The short motif at 515–531 (RKSSHHRRTGMSRHSSK) is the Bipartite nuclear localization signal element. Ser652 is subject to Phosphoserine.

This sequence belongs to the GARIN family. Interacts (via N-terminus) with RAB2B (in GTP-bound form). Interacts with FRG1. As to expression, expressed in adult spermatocytes and spermatids.

It is found in the golgi apparatus. It localises to the nucleus. The protein resides in the cajal body. Its function is as follows. May be involved in RNA biogenesis. The protein is Golgi-associated RAB2B interactor protein 3 of Mus musculus (Mouse).